The chain runs to 262 residues: Apolipoprotein A-I (262 aa).

Positions 1-18 (MKAVVLTLAVLFLTGSQA) are cleaved as a signal peptide. 2 consecutive repeat copies span residues 67–88 (LKLL…EQLG) and 89–110 (PVTQ…QEMN). The segment at 67 to 262 (LKLLDNWDTL…DEASKKLNAQ (196 aa)) is 10 X approximate tandem repeats. At M109 the chain carries Methionine sulfoxide. The stretch at 111-121 (KDLEEVKQKVQ) is one 3; half-length repeat. Tandem repeats lie at residues 122 to 142 (PYLD…RQKV), 144 to 165 (PLGE…DRLS), 166 to 184 (PLAQ…KQLA), 185 to 206 (PYSD…EGGG), and 207 to 227 (SLAE…EKAK). The 9; half-length repeat unit spans residues 228–238 (PALEDLRQGLM). Residue M238 is modified to Methionine sulfoxide. Repeat unit 10 spans residues 239-262 (PVLESLKVSILAAIDEASKKLNAQ).

The protein belongs to the apolipoprotein A1/A4/E family. As to quaternary structure, homodimer. Interacts with APOA1BP and CLU. Component of a sperm activating protein complex (SPAP), consisting of APOA1, an immunoglobulin heavy chain, an immunoglobulin light chain and albumin. Interacts with NDRG1. Interacts with SCGB3A2. Interacts with NAXE and YJEFN3. In terms of processing, glycosylated. Post-translationally, palmitoylated. Phosphorylation sites are present in the extracellular medium. As to expression, major protein of plasma HDL, also found in chylomicrons.

Its subcellular location is the secreted. Its function is as follows. Participates in the reverse transport of cholesterol from tissues to the liver for excretion by promoting cholesterol efflux from tissues and by acting as a cofactor for the lecithin cholesterol acyltransferase (LCAT). As part of the SPAP complex, activates spermatozoa motility. The chain is Apolipoprotein A-I (APOA1) from Pantholops hodgsonii (Chiru).